A 253-amino-acid chain; its full sequence is 3-deoxy-manno-octulosonate cytidylyltransferase (253 aa).

The protein belongs to the KdsB family.

It localises to the cytoplasm. It catalyses the reaction 3-deoxy-alpha-D-manno-oct-2-ulosonate + CTP = CMP-3-deoxy-beta-D-manno-octulosonate + diphosphate. Its pathway is nucleotide-sugar biosynthesis; CMP-3-deoxy-D-manno-octulosonate biosynthesis; CMP-3-deoxy-D-manno-octulosonate from 3-deoxy-D-manno-octulosonate and CTP: step 1/1. It functions in the pathway bacterial outer membrane biogenesis; lipopolysaccharide biosynthesis. Functionally, activates KDO (a required 8-carbon sugar) for incorporation into bacterial lipopolysaccharide in Gram-negative bacteria. This chain is 3-deoxy-manno-octulosonate cytidylyltransferase, found in Acidithiobacillus ferrooxidans (strain ATCC 23270 / DSM 14882 / CIP 104768 / NCIMB 8455) (Ferrobacillus ferrooxidans (strain ATCC 23270)).